A 917-amino-acid chain; its full sequence is Lipoxygenase 6, chloroplastic (917 aa).

A chloroplast-targeting transit peptide spans 1 to 40 (MFVASPVKTNFNGVSLVKSPAFSALSCRKQHRVPISRQVR). Over residues 46 to 57 (EEKAVDQEDGKK) the composition is skewed to basic and acidic residues. The interval 46 to 66 (EEKAVDQEDGKKSTNKPLINS) is disordered. The 119-residue stretch at 98-216 (ERFEHQLELF…DNPQARIIFR (119 aa)) folds into the PLAT domain. The Lipoxygenase domain maps to 219 to 917 (PCLPSETPDG…GRGIPNSISI (699 aa)). His575, His580, His767, and Asn771 together coordinate Fe cation. The segment at 880–904 (KDKKLKNRTGAGMPPYELLLPTSPH) is disordered. Ile917 contacts Fe cation.

This sequence belongs to the lipoxygenase family. The cofactor is Fe cation.

The protein resides in the plastid. Its subcellular location is the chloroplast. It carries out the reaction (9Z,12Z)-octadecadienoate + O2 = (13S)-hydroperoxy-(9Z,11E)-octadecadienoate. The catalysed reaction is (9Z,12Z,15Z)-octadecatrienoate + O2 = (13S)-hydroperoxy-(9Z,11E,15Z)-octadecatrienoate. It participates in lipid metabolism; oxylipin biosynthesis. In terms of biological role, plant lipoxygenases may be involved in a number of diverse aspects of plant physiology including growth and development, pest resistance, and senescence or responses to wounding. Catalyzes the hydroperoxidation of lipids containing a cis,cis-1,4-pentadiene structure. 13S-lipoxygenase that can use linolenic acid as substrates. This is Lipoxygenase 6, chloroplastic from Arabidopsis thaliana (Mouse-ear cress).